The following is a 187-amino-acid chain: Phosphatidylethanolamine-binding protein 1 (187 aa).

Ala2 is subject to N-acetylalanine; in peptide hippocampal cholinergic neurostimulating. A phosphoserine mark is found at Ser6 and Ser13. Position 42 is a phosphothreonine (Thr42). 4 positions are modified to phosphoserine: Ser52, Ser54, Ser98, and Ser153. The segment at Lys93–Asp134 is interaction with RAF1.

Belongs to the phosphatidylethanolamine-binding protein family. In terms of assembly, has a tendency to form dimers by disulfide cross-linking. Interacts with RAF1 and this interaction is enhanced if RAF1 is phosphorylated on residues 'Ser-338', 'Ser-339', 'Tyr-340' and 'Tyr-341'. Interacts with ALOX15; in response to IL13/interleukin-13, prevents the interaction of PEBP1 with RAF1 to activate the ERK signaling cascade. As to expression, major component of epididymal secretions and sperm plasma membranes. It is present in cytosols from a variety of other tissues. Highly expressed in brain.

It is found in the cytoplasm. The protein localises to the membrane. Functionally, binds ATP, opioids and phosphatidylethanolamine. Has lower affinity for phosphatidylinositol and phosphatidylcholine. Serine protease inhibitor which inhibits thrombin, neuropsin and chymotrypsin but not trypsin, tissue type plasminogen activator and elastase. Inhibits the kinase activity of RAF1 by inhibiting its activation and by dissociating the RAF1/MEK complex and acting as a competitive inhibitor of MEK phosphorylation. In terms of biological role, HCNP may be involved in the function of the presynaptic cholinergic neurons of the central nervous system. HCNP increases the production of choline acetyltransferase but not acetylcholinesterase. Seems to be mediated by a specific receptor. The polypeptide is Phosphatidylethanolamine-binding protein 1 (Pebp1) (Rattus norvegicus (Rat)).